Here is a 492-residue protein sequence, read N- to C-terminus: Transmembrane protein 39B (492 aa).

The interval Met1 to Ser53 is disordered. An N-linked (GlcNAc...) asparagine glycan is attached at Asn8. Residues Ser31 to Ser53 are compositionally biased toward low complexity. The next 8 membrane-spanning stretches (helical) occupy residues Ser77 to Ile97, Thr115 to Gly135, Ser153 to Leu175, Thr185 to Leu205, Glu288 to Val308, Leu322 to Ser342, Ile421 to Met441, and His447 to Leu467.

Belongs to the TMEM39 family.

The protein localises to the endoplasmic reticulum membrane. In terms of biological role, may protect the cells against DNA damage caused by exposure to the cold-warming stress and facilitates tissue damage repair during the recovery phase. This Rattus norvegicus (Rat) protein is Transmembrane protein 39B.